Here is an 85-residue protein sequence, read N- to C-terminus: Large ribosomal subunit protein bL27 (85 aa).

Belongs to the bacterial ribosomal protein bL27 family.

The protein is Large ribosomal subunit protein bL27 of Cellvibrio japonicus (strain Ueda107) (Pseudomonas fluorescens subsp. cellulosa).